A 357-amino-acid chain; its full sequence is sn-glycerol-3-phosphate import ATP-binding protein UgpC (357 aa).

Positions 4 to 235 constitute an ABC transporter domain; sequence LKLQAVTKSY…PASLFVASFI (232 aa). 37–44 provides a ligand contact to ATP; that stretch reads GPSGCGKS.

Belongs to the ABC transporter superfamily. sn-glycerol-3-phosphate importer (TC 3.A.1.1.3) family. As to quaternary structure, the complex is composed of two ATP-binding proteins (UgpC), two transmembrane proteins (UgpA and UgpE) and a solute-binding protein (UgpB).

Its subcellular location is the cell inner membrane. It catalyses the reaction sn-glycerol 3-phosphate(out) + ATP + H2O = sn-glycerol 3-phosphate(in) + ADP + phosphate + H(+). In terms of biological role, part of the ABC transporter complex UgpBAEC involved in sn-glycerol-3-phosphate (G3P) import. Responsible for energy coupling to the transport system. In Pectobacterium atrosepticum (strain SCRI 1043 / ATCC BAA-672) (Erwinia carotovora subsp. atroseptica), this protein is sn-glycerol-3-phosphate import ATP-binding protein UgpC.